Reading from the N-terminus, the 206-residue chain is Triosephosphate isomerase (206 aa).

The active-site Electrophile is the H76. The Proton acceptor role is filled by E146.

Belongs to the triosephosphate isomerase family. Homodimer.

The catalysed reaction is D-glyceraldehyde 3-phosphate = dihydroxyacetone phosphate. The protein operates within carbohydrate biosynthesis; gluconeogenesis. Its pathway is carbohydrate degradation; glycolysis; D-glyceraldehyde 3-phosphate from glycerone phosphate: step 1/1. The polypeptide is Triosephosphate isomerase (Tpi) (Anopheles merus (Mosquito)).